We begin with the raw amino-acid sequence, 336 residues long: N-acetylornithine carbamoyltransferase (336 aa).

Residues 49–52 (SMRT), tryptophan 77, and arginine 112 each bind carbamoyl phosphate. N(2)-acetyl-L-ornithine is bound at residue glutamate 144. 148–151 (HPCQ) lines the carbamoyl phosphate pocket. 2 residues coordinate N(2)-acetyl-L-ornithine: lysine 252 and leucine 295. A carbamoyl phosphate-binding site is contributed by 294-295 (CL). Lysine 302 carries the post-translational modification N6-carboxylysine. A carbamoyl phosphate-binding site is contributed by arginine 322.

Belongs to the aspartate/ornithine carbamoyltransferase superfamily. AOTCase family. As to quaternary structure, homotrimer.

The protein localises to the cytoplasm. The enzyme catalyses N(2)-acetyl-L-ornithine + carbamoyl phosphate = N(2)-acetyl-L-citrulline + phosphate + H(+). It functions in the pathway amino-acid biosynthesis; L-arginine biosynthesis. With respect to regulation, carboxylation at Lys-302 increases the catalytic activity of the enzyme. Its function is as follows. Catalyzes the transfer of the carbamoyl group from carbamoyl phosphate to the delta-amino group of N(2)-acetyl-L-ornithine to produce N(2)-acetyl-L-citrulline. This is a step in an alternative arginine biosynthesis pathway. The enzyme has no activity with ornithine. The sequence is that of N-acetylornithine carbamoyltransferase from Xylella fastidiosa (strain 9a5c).